A 341-amino-acid chain; its full sequence is UDP-3-O-(3-hydroxymyristoyl)glucosamine N-acyltransferase (341 aa).

His239 functions as the Proton acceptor in the catalytic mechanism.

It belongs to the transferase hexapeptide repeat family. LpxD subfamily. Homotrimer.

The enzyme catalyses a UDP-3-O-[(3R)-3-hydroxyacyl]-alpha-D-glucosamine + a (3R)-hydroxyacyl-[ACP] = a UDP-2-N,3-O-bis[(3R)-3-hydroxyacyl]-alpha-D-glucosamine + holo-[ACP] + H(+). It carries out the reaction UDP-3-O-[(3R)-3-hydroxytetradecanoyl]-alpha-D-glucosamine + (3R)-hydroxytetradecanoyl-[ACP] = UDP-2-N,3-O-bis[(3R)-3-hydroxytetradecanoyl]-alpha-D-glucosamine + holo-[ACP] + H(+). It participates in glycolipid biosynthesis; lipid IV(A) biosynthesis; lipid IV(A) from (3R)-3-hydroxytetradecanoyl-[acyl-carrier-protein] and UDP-N-acetyl-alpha-D-glucosamine: step 3/6. Its function is as follows. Catalyzes the N-acylation of UDP-3-O-(hydroxytetradecanoyl)glucosamine using 3-hydroxytetradecanoyl-ACP as the acyl donor. Is involved in the biosynthesis of lipid A, a phosphorylated glycolipid that anchors the lipopolysaccharide to the outer membrane of the cell. The sequence is that of UDP-3-O-(3-hydroxymyristoyl)glucosamine N-acyltransferase from Escherichia coli (strain UTI89 / UPEC).